A 135-amino-acid polypeptide reads, in one-letter code: ATP synthase epsilon chain (135 aa).

It belongs to the ATPase epsilon chain family. In terms of assembly, F-type ATPases have 2 components, CF(1) - the catalytic core - and CF(0) - the membrane proton channel. CF(1) has five subunits: alpha(3), beta(3), gamma(1), delta(1), epsilon(1). CF(0) has three main subunits: a, b and c.

It is found in the cellular thylakoid membrane. Produces ATP from ADP in the presence of a proton gradient across the membrane. The protein is ATP synthase epsilon chain of Prochlorococcus marinus (strain MIT 9211).